We begin with the raw amino-acid sequence, 858 residues long: Bifunctional uridylyltransferase/uridylyl-removing enzyme (858 aa).

Residues 1–324 are uridylyltransferase; sequence MSAHAAPSPE…PATSGITRVL (324 aa). The segment at 325-681 is uridylyl-removing; that stretch reads SPDRFVEKQG…ARPSPIGDAL (357 aa). The 123-residue stretch at 443–565 folds into the HD domain; sequence VDQHILMVLR…VGNERYLTAL (123 aa). ACT domains lie at 682–761 and 790–858; these read QVLV…PEPS and ILSV…AIAV.

The protein belongs to the GlnD family. Mg(2+) serves as cofactor.

It catalyses the reaction [protein-PII]-L-tyrosine + UTP = [protein-PII]-uridylyl-L-tyrosine + diphosphate. The catalysed reaction is [protein-PII]-uridylyl-L-tyrosine + H2O = [protein-PII]-L-tyrosine + UMP + H(+). Uridylyltransferase (UTase) activity is inhibited by glutamine, while glutamine activates uridylyl-removing (UR) activity. Its function is as follows. Modifies, by uridylylation and deuridylylation, the PII regulatory proteins (GlnB and homologs), in response to the nitrogen status of the cell that GlnD senses through the glutamine level. Under low glutamine levels, catalyzes the conversion of the PII proteins and UTP to PII-UMP and PPi, while under higher glutamine levels, GlnD hydrolyzes PII-UMP to PII and UMP (deuridylylation). Thus, controls uridylylation state and activity of the PII proteins, and plays an important role in the regulation of nitrogen fixation and metabolism. In Burkholderia lata (strain ATCC 17760 / DSM 23089 / LMG 22485 / NCIMB 9086 / R18194 / 383), this protein is Bifunctional uridylyltransferase/uridylyl-removing enzyme.